Here is a 95-residue protein sequence, read N- to C-terminus: Small ribosomal subunit protein bS16 (95 aa).

Belongs to the bacterial ribosomal protein bS16 family.

The sequence is that of Small ribosomal subunit protein bS16 from Streptococcus pneumoniae (strain CGSP14).